The following is a 203-amino-acid chain: Pectinesterase inhibitor 12 (203 aa).

The first 26 residues, M1–A26, serve as a signal peptide directing secretion. Intrachain disulfides connect C32/C47 and C100/C140.

This sequence belongs to the PMEI family.

The protein localises to the secreted. It is found in the extracellular space. Its subcellular location is the apoplast. In terms of biological role, pectin methylesterase (PME) inhibitor that inhibits PME in vitro. This is Pectinesterase inhibitor 12 from Oryza sativa subsp. japonica (Rice).